The primary structure comprises 181 residues: RING-H2 finger protein ATL72 (181 aa).

Residues valine 34 to leucine 54 traverse the membrane as a helical segment. An RING-type; atypical zinc finger spans residues cysteine 114 to arginine 156.

The protein belongs to the RING-type zinc finger family. ATL subfamily.

The protein resides in the membrane. The enzyme catalyses S-ubiquitinyl-[E2 ubiquitin-conjugating enzyme]-L-cysteine + [acceptor protein]-L-lysine = [E2 ubiquitin-conjugating enzyme]-L-cysteine + N(6)-ubiquitinyl-[acceptor protein]-L-lysine.. It participates in protein modification; protein ubiquitination. The polypeptide is RING-H2 finger protein ATL72 (ATL72) (Arabidopsis thaliana (Mouse-ear cress)).